The primary structure comprises 253 residues: MTSIFFNRHYPTIESACERWGLVYDPDAEFELVFEDNILTLIKRDEPKLKGISVDFVSGAVAHRRKFGGGRGQSIAKAVGLKQGVMPTVVDGTAGLGRDAFVLASLGCKVLMVERHPIVAALLEDGLRRAYEDAEIGGWMQQRMSLFHGSSIDSLADAAKASNTEVDVVYLDPMYPHREKSALVKKEMRVFQSLVGADLDADGLLAPAMALATKRVVVKRPDYADDLDGVKPSMVIATKKNRFDVYVKAAMTA.

Residues 98 to 99 (RD), 114 to 115 (ER), 150 to 151 (SS), and D172 each bind S-adenosyl-L-methionine.

This sequence belongs to the methyltransferase superfamily. RsmJ family.

It localises to the cytoplasm. The catalysed reaction is guanosine(1516) in 16S rRNA + S-adenosyl-L-methionine = N(2)-methylguanosine(1516) in 16S rRNA + S-adenosyl-L-homocysteine + H(+). Specifically methylates the guanosine in position 1516 of 16S rRNA. The sequence is that of Ribosomal RNA small subunit methyltransferase J from Shewanella pealeana (strain ATCC 700345 / ANG-SQ1).